The chain runs to 366 residues: Phosphoserine aminotransferase (366 aa).

Position 42 (R42) interacts with L-glutamate. Pyridoxal 5'-phosphate-binding positions include 76 to 77 (AT), W101, T156, D178, and Q201. K202 is modified (N6-(pyridoxal phosphate)lysine). 243–244 (NT) is a pyridoxal 5'-phosphate binding site.

The protein belongs to the class-V pyridoxal-phosphate-dependent aminotransferase family. SerC subfamily. As to quaternary structure, homodimer. The cofactor is pyridoxal 5'-phosphate.

Its subcellular location is the cytoplasm. It carries out the reaction O-phospho-L-serine + 2-oxoglutarate = 3-phosphooxypyruvate + L-glutamate. The catalysed reaction is 4-(phosphooxy)-L-threonine + 2-oxoglutarate = (R)-3-hydroxy-2-oxo-4-phosphooxybutanoate + L-glutamate. Its pathway is amino-acid biosynthesis; L-serine biosynthesis; L-serine from 3-phospho-D-glycerate: step 2/3. It functions in the pathway cofactor biosynthesis; pyridoxine 5'-phosphate biosynthesis; pyridoxine 5'-phosphate from D-erythrose 4-phosphate: step 3/5. In terms of biological role, catalyzes the reversible conversion of 3-phosphohydroxypyruvate to phosphoserine and of 3-hydroxy-2-oxo-4-phosphonooxybutanoate to phosphohydroxythreonine. This chain is Phosphoserine aminotransferase, found in Aromatoleum aromaticum (strain DSM 19018 / LMG 30748 / EbN1) (Azoarcus sp. (strain EbN1)).